Reading from the N-terminus, the 290-residue chain is MDIEAYFERIGYKNSRNKLDLETLTDILEHQIRAVPFENLNMHCGEAMELGLETIFDHIVRRNRGGWCLQVNQLLYWALTTIGFQTTMLGGYVYIPAANKYSTGMIHLLLQVTIDGRNYIADAGFGSSSQMWQPLELISGKDQPQMPSIFRLTEQKGIWYLDQIRREQYIPNTEFLNSDLLPKTTHQKVYSFTLEPRKIEDFESMNTYLQTSPTSAFTTTSFCSLQTPEGVHCLVGFTLTYRIFNYKDNTDLIEFKTLIEEEVEEVLKNIFKISLGRKLVPKPGNGSFTI.

The active-site Acyl-thioester intermediate is Cys68. The CoA site is built by Thr103 and Gly104. 106–107 is a binding site for substrate; the sequence is IH. Residues His107 and Asp122 contribute to the active site. Tyr208, Thr214, and Ser287 together coordinate CoA.

It belongs to the arylamine N-acetyltransferase family.

It localises to the cytoplasm. It carries out the reaction an arylamine + acetyl-CoA = an N-acetylarylamine + CoA. It catalyses the reaction an N-hydroxyarylamine + acetyl-CoA = an N-acetoxyarylamine + CoA. Functionally, catalyzes the N- or O-acetylation of various arylamine and heterocyclic amine substrates, and participates in the detoxification of a plethora of hydrazine and arylamine drugs. The sequence is that of Arylamine N-acetyltransferase 2 (NAT2) from Macaca mulatta (Rhesus macaque).